Here is a 252-residue protein sequence, read N- to C-terminus: uncharacterized protein (252 aa).

Composition is skewed to polar residues over residues 108 to 122 and 136 to 153; these read RTTMRQGRFPSSSSE and MPNTGASSSQDPFTNSQS. The tract at residues 108–252 is disordered; the sequence is RTTMRQGRFP…LIWNDSSSSK (145 aa). The span at 154 to 172 shows a compositional bias: basic and acidic residues; that stretch reads TEKEDAMYSKDNGFEDRSK. Positions 201–226 are enriched in polar residues; the sequence is VKSTDSAFSGQENSEAFPSRTSNLGS.

The protein resides in the cytoplasm. The protein localises to the mitochondrion. It localises to the nucleus. This is an uncharacterized protein from Schizosaccharomyces pombe (strain 972 / ATCC 24843) (Fission yeast).